The chain runs to 192 residues: Genome polyprotein (192 aa).

At 1–52 (RNLGKVIDTLTCGFADLMGYIPLVGAPLGGAARALAHGVRVLEDGVNYATGN) the chain is on the cytoplasmic side. The interaction with APOA2 stretch occupies residues 6-57 (VIDTLTCGFADLMGYIPLVGAPLGGAARALAHGVRVLEDGVNYATGNLPGCS). An important for lipid droplets localization region spans residues 48–51 (YATG). The helical transmembrane segment at 53 to 73 (LPGCSFSIFLLALLSCLTVPA) threads the bilayer. The propeptide at 62–75 (LLALLSCLTVPASA) is ER anchor for the core protein, removed in mature form by host signal peptidase. The Lumenal portion of the chain corresponds to 74–192 (SAYQVRNSSG…WTTQGCNCSI (119 aa)). 3 N-linked (GlcNAc...) asparagine; by host glycosylation sites follow: asparagine 80, asparagine 93, and asparagine 118. The segment at 149 to 180 (LVGSATLCSALYVGDLCGSVFLVGQLFTFSPR) is important for fusion. N-linked (GlcNAc...) asparagine; by host glycosylation is present at asparagine 189.

The protein belongs to the hepacivirus polyprotein family. Homooligomer. Interacts with E1 (via C-terminus). Interacts with the non-structural protein 5A. Interacts (via N-terminus) with host STAT1 (via SH2 domain); this interaction results in decreased STAT1 phosphorylation and ubiquitin-mediated proteasome-dependent STAT1 degradation, leading to decreased IFN-stimulated gene transcription. Interacts with host STAT3; this interaction constitutively activates STAT3. Interacts with host LTBR receptor. Interacts with host TNFRSF1A receptor and possibly induces apoptosis. Interacts with host HNRPK. Interacts with host YWHAE. Interacts with host UBE3A/E6AP. Interacts with host DDX3X. Interacts with host APOA2. Interacts with host RXRA protein. Interacts with host SP110 isoform 3/Sp110b; this interaction sequesters the transcriptional corepressor SP110 away from the nucleus. Interacts with host CREB3 nuclear transcription protein; this interaction triggers cell transformation. Interacts with host ACY3. Interacts with host C1QR1. Interacts with host RBM24; this interaction, which enhances the interaction of the mature core protein with 5'-UTR, may inhibit viral translation and favor replication. Interacts with host EIF2AK2/PKR; this interaction induces the autophosphorylation of EIF2AK2. Part of the viral assembly initiation complex composed of NS2, E1, E2, NS3, NS4A, NS5A and the mature core protein. As to quaternary structure, forms a heterodimer with envelope glycoprotein E2. Interacts with mature core protein. Interacts with protease NS2. The heterodimer E1/E2 interacts with host CLDN1; this interaction plays a role in viral entry into host cell. Interacts with host SPSB2 (via C-terminus). Part of the viral assembly initiation complex composed of NS2, E1, E2, NS3, NS4A, NS5A and the mature core protein. Specific enzymatic cleavages in vivo yield mature proteins. The structural proteins, core, E1, E2 and p7 are produced by proteolytic processing by host signal peptidases. The core protein precursor is synthesized as a 23 kDa, which is retained in the ER membrane through the hydrophobic signal peptide. Cleavage by the signal peptidase releases the 21 kDa mature core protein. The cleavage of the core protein precursor occurs between aminoacids 176 and 188 but the exact cleavage site is not known. Some degraded forms of the core protein appear as well during the course of infection. The other proteins (p7, NS2, NS3, NS4A, NS4B, NS5A and NS5B) are cleaved by the viral proteases. Autoprocessing between NS2 and NS3 is mediated by the NS2 cysteine protease catalytic domain and regulated by the NS3 N-terminal domain. In terms of processing, phosphorylated by host PKC and PKA. Post-translationally, ubiquitinated; mediated by UBE3A and leading to core protein subsequent proteasomal degradation. Highly N-glycosylated.

It is found in the host endoplasmic reticulum membrane. Its subcellular location is the host mitochondrion membrane. The protein localises to the virion. It localises to the host cytoplasm. The protein resides in the host nucleus. It is found in the host lipid droplet. Its subcellular location is the virion membrane. In terms of biological role, packages viral RNA to form a viral nucleocapsid, and promotes virion budding. Participates in the viral particle production as a result of its interaction with the non-structural protein 5A. Binds RNA and may function as a RNA chaperone to induce the RNA structural rearrangements taking place during virus replication. Modulates viral translation initiation by interacting with viral IRES and 40S ribosomal subunit. Affects various cell signaling pathways, host immunity and lipid metabolism. Prevents the establishment of cellular antiviral state by blocking the interferon-alpha/beta (IFN-alpha/beta) and IFN-gamma signaling pathways and by blocking the formation of phosphorylated STAT1 and promoting ubiquitin-mediated proteasome-dependent degradation of STAT1. Activates STAT3 leading to cellular transformation. Regulates the activity of cellular genes, including c-myc and c-fos. May repress the promoter of p53, and sequester CREB3 and SP110 isoform 3/Sp110b in the cytoplasm. Represses cell cycle negative regulating factor CDKN1A, thereby interrupting an important check point of normal cell cycle regulation. Targets transcription factors involved in the regulation of inflammatory responses and in the immune response: suppresses TNF-induced NF-kappa-B activation, and activates AP-1. Binds to dendritic cells (DCs) via C1QR1, resulting in down-regulation of T-lymphocytes proliferation. Alters lipid metabolism by interacting with hepatocellular proteins involved in lipid accumulation and storage. Induces up-regulation of FAS promoter activity, and thereby contributes to the increased triglyceride accumulation in hepatocytes (steatosis). Its function is as follows. Forms a heterodimer with envelope glycoprotein E2, which mediates virus attachment to the host cell, virion internalization through clathrin-dependent endocytosis and fusion with host membrane. Fusion with the host cell is most likely mediated by both E1 and E2, through conformational rearrangements of the heterodimer required for fusion rather than a classical class II fusion mechanism. E1/E2 heterodimer binds host apolipoproteins such as APOB and ApoE thereby forming a lipo-viro-particle (LVP). APOE associated to the LVP allows the initial virus attachment to cell surface receptors such as the heparan sulfate proteoglycans (HSPGs), syndecan-1 (SDC1), syndecan-1 (SDC2), the low-density lipoprotein receptor (LDLR) and scavenger receptor class B type I (SCARB1). The cholesterol transfer activity of SCARB1 allows E2 exposure and binding of E2 to SCARB1 and the tetraspanin CD81. E1/E2 heterodimer binding on CD81 activates the epithelial growth factor receptor (EGFR) signaling pathway. Diffusion of the complex E1-E2-EGFR-SCARB1-CD81 to the cell lateral membrane allows further interaction with Claudin 1 (CLDN1) and occludin (OCLN) to finally trigger HCV entry. The polypeptide is Genome polyprotein (Hepatitis C virus (isolate EC1) (HCV)).